The primary structure comprises 243 residues: Thiamin pyrophosphokinase 1 (243 aa).

It belongs to the thiamine pyrophosphokinase family.

The enzyme catalyses thiamine + ATP = thiamine diphosphate + AMP + H(+). The protein operates within cofactor biosynthesis; thiamine diphosphate biosynthesis; thiamine diphosphate from thiamine: step 1/1. Catalyzes the phosphorylation of thiamine to thiamine pyrophosphate. Functions cell non-autonomously. The protein is Thiamin pyrophosphokinase 1 of Caenorhabditis elegans.